Reading from the N-terminus, the 326-residue chain is uncharacterized protein (326 aa).

Residue Gly-127–Ser-134 coordinates ATP.

The protein belongs to the GSP E family.

This is an uncharacterized protein from Escherichia coli (strain K12).